Here is a 333-residue protein sequence, read N- to C-terminus: MLLLPLLLLGVILPGGDNEDVFQGPTSFHLKQISTFVNSTWAQNLGSGWLDDLQIHGWESDSGTAIFLKPWSKGNFSDEEITELVDLFRVYLIGFIREVQDRVNEFQLEYPFVIQVIEGCELHSGEAIESSLRGALGGLDVLRIQNHSCMPAPDSGNRGQKLCALLSQYQGTSDIIERLVSETCPRYLLGVLDAGKAELQRQVKPEAWLSSGPTPGPGRLLLVCHVSGFYPKPVQVIWMRGKQEQPGTQQGDIMPNADWTWYLRVTLNVAAGEAAGLSCRVKHSSLGDQDIILYWGHPTSIGLILVAIIVPSLILSICLALWFWRRWSYQNIL.

The signal sequence occupies residues 1 to 20 (MLLLPLLLLGVILPGGDNED). The Extracellular segment spans residues 21–302 (VFQGPTSFHL…LYWGHPTSIG (282 aa)). Asn38, Asn75, and Asn146 each carry an N-linked (GlcNAc...) asparagine glycan. 3 disulfide bridges follow: Cys120–Cys184, Cys149–Cys163, and Cys224–Cys279. One can recognise an Ig-like domain in the interval 185–295 (PRYLLGVLDA…LGDQDIILYW (111 aa)). Residues 303–323 (LILVAIIVPSLILSICLALWF) traverse the membrane as a helical segment. At 324–333 (WRRWSYQNIL) the chain is on the cytoplasmic side. Positions 329-332 (YQNI) match the Internalization signal motif.

As to quaternary structure, heterodimer with B2M (beta-2-microglobulin). Interacts with saposin C.

It is found in the cell membrane. The protein resides in the endosome membrane. Its subcellular location is the lysosome membrane. Functionally, antigen-presenting protein that binds self and non-self lipid and glycolipid antigens and presents them to T-cell receptors on natural killer T-cells. This is T-cell surface glycoprotein CD1b-2 from Ovis aries (Sheep).